The primary structure comprises 183 residues: Putative ribosomal N-acetyltransferase YdaF (183 aa).

In terms of domain architecture, N-acetyltransferase spans 10-176 (ITIRLLEPKD…HDLVYYSLLK (167 aa)).

The protein belongs to the acetyltransferase family. Homohexamer, and homodimer.

In terms of biological role, putative N-acetyltransferase. May act on ribosomal proteins (Potential). The sequence is that of Putative ribosomal N-acetyltransferase YdaF (ydaF) from Bacillus subtilis (strain 168).